The primary structure comprises 1149 residues: Transforming acidic coiled-coil-containing protein 2 (1149 aa).

Disordered stretches follow at residues 1 to 73 (MGNE…GSNQ), 91 to 227 (SASP…ASSG), and 247 to 430 (PCSA…VPLT). A compositionally biased stretch (polar residues) spans 13-35 (TSSVQSPRSLQPPGKSQSLQKQQ). A compositionally biased stretch (low complexity) spans 91 to 106 (SASPSAARASPAPLAP). Serine 100 is subject to Phosphoserine. The span at 155 to 180 (KAPPAPPPPPPEVTPEPEVIDPPAPE) shows a compositional bias: pro residues. Position 265 is a phosphoserine (serine 265). 2 stretches are compositionally biased toward polar residues: residues 267–284 (ESVPPSKSTLSRSLSLQA) and 300–317 (TLTTDACGTGSNSASSTL). Positions 318 to 334 (KRTKKTRPPSLKKKQAT) are enriched in basic residues. Residue serine 354 is modified to Phosphoserine. Residues 358-368 (SEEHLAPETKT) are compositionally biased toward basic and acidic residues. Residue serine 419 is modified to Phosphoserine. Threonine 439 bears the Phosphothreonine mark. The tract at residues 463–617 (SEDKGSWESQ…PAKKKKTPLK (155 aa)) is disordered. The span at 481–498 (KIGKKPVAKMPLRRPKMK) shows a compositional bias: basic residues. In terms of domain architecture, SPAZ spans 508 to 596 (PASPPRSPTE…SPASFEIPAS (89 aa)). Phosphoserine occurs at positions 510 and 514. Threonine 516 carries the post-translational modification Phosphothreonine. Polar residues predominate over residues 541–561 (NPFSSTSKMQESPKLSQQSYN). Phosphoserine is present on residues serine 552, serine 582, serine 585, serine 587, and serine 596. Low complexity predominate over residues 575 to 590 (KASSKTPSSPSKSPAS). A phosphothreonine mark is found at threonine 632, threonine 653, and threonine 657. Disordered regions lie at residues 636-665 (KKSPKRSPLSDPPSQDPTPAATPEAPSAIS) and 696-719 (DFPQPSDLSNFVNETKFNSPSEEL). A compositionally biased stretch (low complexity) spans 652–665 (PTPAATPEAPSAIS). The segment covering 701–716 (SDLSNFVNETKFNSPS) has biased composition (polar residues). 2 positions are modified to phosphoserine: serine 714 and serine 736. At threonine 755 the chain carries Phosphothreonine. The disordered stretch occupies residues 756-780 (PQESPVKSPPVRMSDSPTPCSGSSF). 2 positions are modified to phosphoserine: serine 759 and serine 771. Polar residues predominate over residues 770 to 780 (DSPTPCSGSSF). Coiled coils occupy residues 877 to 905 (AQKLQEELEFAVMRIEALKLARQIALASR) and 948 to 1148 (DLDS…KMGK).

Belongs to the TACC family. Interacts with microtubules. Interacts with YEATS4, GCN5L2 and PCAF. Interacts with CCDC100/CEP120. Post-translationally, phosphorylated; which is required for localization in centrosome. In terms of tissue distribution, expressed in brain, kidney, lung, thymus and ovary. Not detectable in normal tissues at protein level.

It localises to the cytoplasm. The protein resides in the nucleus. The protein localises to the cytoskeleton. Its subcellular location is the microtubule organizing center. It is found in the centrosome. In terms of biological role, plays a role in the microtubule-dependent coupling of the nucleus and the centrosome. Involved in the processes that regulate centrosome-mediated interkinetic nuclear migration (INM) of neural progenitors. May play a role in organizing centrosomal microtubules. This chain is Transforming acidic coiled-coil-containing protein 2 (Tacc2), found in Mus musculus (Mouse).